Reading from the N-terminus, the 305-residue chain is RNA-binding protein with serine-rich domain 1 (305 aa).

A compositionally biased stretch (basic residues) spans 1–10; that stretch reads MDLSGVKKKS. Positions 1-161 are necessary for interaction with SRP54, nuclear localization and exon-skipping; sequence MDLSGVKKKS…KRRSPSPKPT (161 aa). The interval 1–170 is disordered; that stretch reads MDLSGVKKKS…TKVHIGRLTR (170 aa). The interval 1-220 is necessary for interaction with the cleaved p110 isoform of CDC2L1; the sequence is MDLSGVKKKS…ENPDEAEKAL (220 aa). Residues Lys7 and Lys15 each participate in a glycyl lysine isopeptide (Lys-Gly) (interchain with G-Cter in SUMO2) cross-link. Positions 33–59 are enriched in basic and acidic residues; that stretch reads DRSDEKSKDRSKDKGTTKESSEKDRGR. Ser53 bears the Phosphoserine mark. Residues 68-126 show a composition bias toward low complexity; the sequence is ASSGSSSTRSRSSSTSSSGSSTSTGSSSGSSSSSASSRSGSSSTSRSSSSSSSSGSPSP. The tract at residues 69-121 is necessary for interactions with UPF2 and UPF3B and UPF2-dependent NMD; that stretch reads SSGSSSTRSRSSSTSSSGSSTSTGSSSGSSSSSASSRSGSSSTSRSSSSSSSS. Basic residues-rich tracts occupy residues 127–143 and 151–167; these read SRRR…KSKP and RKRR…HIGR. Phosphoserine occurs at positions 155 and 157. The necessary for interaction with PNN and exon-skipping stretch occupies residues 156–242; that stretch reads PSPKPTKVHI…ITATAVLAPW (87 aa). Residues 159-244 are interaction with SAP18 and ACIN1; it reads KPTKVHIGRL…ATAVLAPWPR (86 aa). Thr161 is subject to Phosphothreonine. The RRM domain occupies 161–240; the sequence is TKVHIGRLTR…QEITATAVLA (80 aa). Residue Lys218 is modified to N6-acetyllysine. The segment at 238–305 is necessary for interaction with TRA2B, nuclear localization and exon-skipping; the sequence is VLAPWPRPPP…RSRSSSNSSR (68 aa). The interval 240–305 is disordered; it reads APWPRPPPRR…RSRSSSNSSR (66 aa). Positions 242–262 are enriched in pro residues; it reads WPRPPPRRFSPPRRMLPPPPM. Positions 266 to 298 are enriched in basic residues; sequence SPPRMRRRSRSPRRRSPVRRRSRSPGRRRHRSR.

The protein belongs to the splicing factor SR family. As to quaternary structure, found in mRNA splicing-dependent exon junction complexes (EJC). Found in a post-splicing complex with NXF1, RBM8A, UPF1, UPF2, UPF3A, UPF3B and RNPS1. Component of the heterotrimeric ASAP (apoptosis- and splicing-associated protein) and PSAP complexes consisting of RNPS1, SAP18 and either ACIN1 or PNN, respectively; the ASAP and PSAP complexes probably are formed mutually exclusive. Component of the active spliceosome. Associates with polysomes. Interacts with the cleaved p110 isoform of CDC2L1, CSNK2A1, PNN, SART3, SRP54, SRRM1 and TRA2B/SFRS10. In terms of processing, phosphorylated on one or more of the four Ser/Thr residues (Ser-43, Thr-49, Ser-52 or Ser-53). Ser-53 phosphorylation site is important for splicing and translation stimulation activity in vitro.

It localises to the nucleus. The protein localises to the nucleus speckle. The protein resides in the cytoplasm. Part of pre- and post-splicing multiprotein mRNP complexes. Auxiliary component of the splicing-dependent multiprotein exon junction complex (EJC) deposited at splice junction on mRNAs. The EJC is a dynamic structure consisting of core proteins and several peripheral nuclear and cytoplasmic associated factors that join the complex only transiently either during EJC assembly or during subsequent mRNA metabolism. Component of the ASAP and PSAP complexes which bind RNA in a sequence-independent manner and are proposed to be recruited to the EJC prior to or during the splicing process and to regulate specific excision of introns in specific transcription subsets. The ASAP complex can inhibit RNA processing during in vitro splicing reactions. The ASAP complex promotes apoptosis and is disassembled after induction of apoptosis. Enhances the formation of the ATP-dependent A complex of the spliceosome. Involved in both constitutive splicing and, in association with SRP54 and TRA2B/SFRS10, in distinctive modulation of alternative splicing in a substrate-dependent manner. Involved in the splicing modulation of BCL2L1/Bcl-X (and probably other apoptotic genes); specifically inhibits formation of proapoptotic isoforms such as Bcl-X(S); the activity is different from the established EJC assembly and function. Participates in mRNA 3'-end cleavage. Involved in UPF2-dependent nonsense-mediated decay (NMD) of mRNAs containing premature stop codons. Also mediates increase of mRNA abundance and translational efficiency. Binds spliced mRNA 20-25 nt upstream of exon-exon junctions. The chain is RNA-binding protein with serine-rich domain 1 (Rnps1) from Rattus norvegicus (Rat).